A 38-amino-acid polypeptide reads, in one-letter code: Photosystem II reaction center protein L (38 aa).

The helical transmembrane segment at Ser-17 to Phe-37 threads the bilayer.

Belongs to the PsbL family. In terms of assembly, PSII is composed of 1 copy each of membrane proteins PsbA, PsbB, PsbC, PsbD, PsbE, PsbF, PsbH, PsbI, PsbJ, PsbK, PsbL, PsbM, PsbT, PsbX, PsbY, PsbZ, Psb30/Ycf12, at least 3 peripheral proteins of the oxygen-evolving complex and a large number of cofactors. It forms dimeric complexes.

It is found in the plastid. The protein resides in the chloroplast thylakoid membrane. In terms of biological role, one of the components of the core complex of photosystem II (PSII). PSII is a light-driven water:plastoquinone oxidoreductase that uses light energy to abstract electrons from H(2)O, generating O(2) and a proton gradient subsequently used for ATP formation. It consists of a core antenna complex that captures photons, and an electron transfer chain that converts photonic excitation into a charge separation. This subunit is found at the monomer-monomer interface and is required for correct PSII assembly and/or dimerization. The protein is Photosystem II reaction center protein L of Bowenia serrulata (Byfield fern).